An 80-amino-acid polypeptide reads, in one-letter code: ATP synthase subunit c (80 aa).

Helical transmembrane passes span 8-28 (MIYF…AIGI) and 55-75 (IVMG…LYLI).

The protein belongs to the ATPase C chain family. In terms of assembly, F-type ATPases have 2 components, F(1) - the catalytic core - and F(0) - the membrane proton channel. F(1) has five subunits: alpha(3), beta(3), gamma(1), delta(1), epsilon(1). F(0) has three main subunits: a(1), b(2) and c(10-14). The alpha and beta chains form an alternating ring which encloses part of the gamma chain. F(1) is attached to F(0) by a central stalk formed by the gamma and epsilon chains, while a peripheral stalk is formed by the delta and b chains.

Its subcellular location is the cell inner membrane. Its function is as follows. F(1)F(0) ATP synthase produces ATP from ADP in the presence of a proton or sodium gradient. F-type ATPases consist of two structural domains, F(1) containing the extramembraneous catalytic core and F(0) containing the membrane proton channel, linked together by a central stalk and a peripheral stalk. During catalysis, ATP synthesis in the catalytic domain of F(1) is coupled via a rotary mechanism of the central stalk subunits to proton translocation. Functionally, key component of the F(0) channel; it plays a direct role in translocation across the membrane. A homomeric c-ring of between 10-14 subunits forms the central stalk rotor element with the F(1) delta and epsilon subunits. In Aeromonas salmonicida (strain A449), this protein is ATP synthase subunit c.